A 931-amino-acid chain; its full sequence is Beta-mannosidase A (931 aa).

The signal sequence occupies residues 1–21 (MRHSIGLAAALLAPTLPVALG). N40, N79, N247, N282, N316, N326, and N347 each carry an N-linked (GlcNAc...) asparagine glycan. E479 (proton donor) is an active-site residue. N550, N608, N658, N738, N790, N798, N830, and N918 each carry an N-linked (GlcNAc...) asparagine glycan.

This sequence belongs to the glycosyl hydrolase 2 family. Beta-mannosidase A subfamily. Homodimer.

Its subcellular location is the secreted. The catalysed reaction is Hydrolysis of terminal, non-reducing beta-D-mannose residues in beta-D-mannosides.. Its pathway is glycan metabolism; N-glycan degradation. Exoglycosidase that cleaves the single beta-linked mannose residue from the non-reducing end of beta-mannosidic oligosaccharides of various complexity and length. Involved in the degradation of polymeric mannan and galactomannan. This Aspergillus niger (strain ATCC MYA-4892 / CBS 513.88 / FGSC A1513) protein is Beta-mannosidase A (mndA).